Here is a 342-residue protein sequence, read N- to C-terminus: Aspartate carbamoyltransferase catalytic subunit (342 aa).

Residues R54 and T55 each contribute to the carbamoyl phosphate site. K82 contributes to the L-aspartate binding site. Residues R104, H134, and Q137 each coordinate carbamoyl phosphate. Positions 177 and 232 each coordinate L-aspartate. The carbamoyl phosphate site is built by G277 and P278.

This sequence belongs to the aspartate/ornithine carbamoyltransferase superfamily. ATCase family. In terms of assembly, heterododecamer (2C3:3R2) of six catalytic PyrB chains organized as two trimers (C3), and six regulatory PyrI chains organized as three dimers (R2).

It catalyses the reaction carbamoyl phosphate + L-aspartate = N-carbamoyl-L-aspartate + phosphate + H(+). It participates in pyrimidine metabolism; UMP biosynthesis via de novo pathway; (S)-dihydroorotate from bicarbonate: step 2/3. Catalyzes the condensation of carbamoyl phosphate and aspartate to form carbamoyl aspartate and inorganic phosphate, the committed step in the de novo pyrimidine nucleotide biosynthesis pathway. This is Aspartate carbamoyltransferase catalytic subunit from Pseudarthrobacter chlorophenolicus (strain ATCC 700700 / DSM 12829 / CIP 107037 / JCM 12360 / KCTC 9906 / NCIMB 13794 / A6) (Arthrobacter chlorophenolicus).